The chain runs to 306 residues: Palmitoyl-protein thioesterase 1 (306 aa).

A signal peptide spans Met-1 to Leu-27. Intrachain disulfides connect Cys-45–Cys-46, Cys-96–Cys-128, and Cys-152–Cys-160. The active site involves Ser-115. N-linked (GlcNAc...) asparagine glycans are attached at residues Asn-197, Asn-212, and Asn-232. Residues Asp-233 and His-289 contribute to the active site.

The protein belongs to the palmitoyl-protein thioesterase family. As to quaternary structure, interacts with CLN5, ATP5F1A and ATP5F1B. Post-translationally, glycosylated.

The protein localises to the lysosome. The protein resides in the secreted. Its subcellular location is the golgi apparatus. It is found in the endoplasmic reticulum. It carries out the reaction S-hexadecanoyl-L-cysteinyl-[protein] + H2O = L-cysteinyl-[protein] + hexadecanoate + H(+). The catalysed reaction is hexadecanoyl-CoA + H2O = hexadecanoate + CoA + H(+). The enzyme catalyses S-hexadecanoyl-N-acetylcysteamine + H2O = N-acetylcysteamine + hexadecanoate + H(+). It catalyses the reaction S-hexadecanoyl-N-acetylcysteine methyl ester + H2O = N-acetylcysteine methyl ester + hexadecanoate + H(+). Palmitoylation reduces PPT1 enzymatic activity. Has thioesterase activity against fatty acid thioesters with 14 -18 carbons, including palmitoyl-CoA, S-palmitoyl-N-acetylcysteamine, and palmitoylated proteins. In contrast to PPT2, PPT1 can hydrolyze palmitoylated proteins and palmitoylcysteine. In Macaca fascicularis (Crab-eating macaque), this protein is Palmitoyl-protein thioesterase 1 (PPT1).